Reading from the N-terminus, the 366-residue chain is Tripartite motif-containing protein 54 (366 aa).

An RING-type zinc finger spans residues 26 to 82 (CPICLEMFSKPVVILPCQHNLCRKCANDVFQASNPLWQSRSSTTVSSGGRFRCPSCR). A B box-type zinc finger spans residues 121–163 (EQHLMCEEHEDEKINIYCLSCEVPTCSLCKVFGAHKDCEVAPL). Zn(2+) is bound by residues C126, H129, C149, and H155. Positions 168 to 211 (KRQKSELSDGIAMLVAGNDRVQAVITQMEEVCQTIEENSRRQKQ) are mediates microtubule-binding and homooligomerization. A coiled-coil region spans residues 185–258 (NDRVQAVITQ…LIRQYGDHLE (74 aa)). The region spanning 271 to 329 (MEEPQMALYLQQAKELINKVGTMSKVELAGRPEPGYERMDQFTVSVEHVAEMLRTIDFQ) is the COS domain. A disordered region spans residues 326–366 (IDFQPGTSGEEEDEEVAVEGEEGNAGPEEERTDGRESTGQH). Acidic residues predominate over residues 334–347 (GEEEDEEVAVEGEE). Positions 353-366 (EEERTDGRESTGQH) are enriched in basic and acidic residues.

As to quaternary structure, homooligomer and heterooligomer. Interacts with TRIM63 and probably with TRIM55. Interacts with tubulin.

The protein localises to the cytoplasm. It localises to the cytoskeleton. It is found in the myofibril. The protein resides in the sarcomere. Its subcellular location is the z line. In terms of biological role, may bind and stabilize microtubules during myotubes formation. This is Tripartite motif-containing protein 54 (TRIM54) from Bos taurus (Bovine).